A 204-amino-acid chain; its full sequence is Urease accessory protein UreG (204 aa).

11–18 (GPVGAGKT) provides a ligand contact to GTP.

This sequence belongs to the SIMIBI class G3E GTPase family. UreG subfamily. As to quaternary structure, homodimer. UreD, UreF and UreG form a complex that acts as a GTP-hydrolysis-dependent molecular chaperone, activating the urease apoprotein by helping to assemble the nickel containing metallocenter of UreC. The UreE protein probably delivers the nickel.

It localises to the cytoplasm. Functionally, facilitates the functional incorporation of the urease nickel metallocenter. This process requires GTP hydrolysis, probably effectuated by UreG. The polypeptide is Urease accessory protein UreG (Staphylococcus aureus (strain Mu3 / ATCC 700698)).